Here is a 503-residue protein sequence, read N- to C-terminus: Galactose/methyl galactoside import ATP-binding protein MglA 2 (503 aa).

ABC transporter domains are found at residues 11–246 (LEMT…VGRE) and 257–503 (TPKE…SRYL). Residue 43–50 (GENGAGKS) participates in ATP binding.

This sequence belongs to the ABC transporter superfamily. Galactose/methyl galactoside importer (TC 3.A.1.2.3) family. As to quaternary structure, the complex is composed of one ATP-binding protein (MglA), two transmembrane proteins (MglC) and a solute-binding protein (MglB).

The protein resides in the cell inner membrane. It catalyses the reaction D-galactose(out) + ATP + H2O = D-galactose(in) + ADP + phosphate + H(+). The catalysed reaction is methyl beta-D-galactoside(out) + ATP + H2O = methyl beta-D-galactoside(in) + ADP + phosphate + H(+). Its function is as follows. Part of the ABC transporter complex MglABC involved in galactose/methyl galactoside import. Responsible for energy coupling to the transport system. The sequence is that of Galactose/methyl galactoside import ATP-binding protein MglA 2 from Photobacterium profundum (strain SS9).